We begin with the raw amino-acid sequence, 522 residues long: Probable poly(ADP-ribose) glycohydrolase 2 (522 aa).

The protein belongs to the poly(ADP-ribose) glycohydrolase family.

It carries out the reaction [(1''-&gt;2')-ADP-alpha-D-ribose](n) + H2O = [(1''-&gt;2')-ADP-alpha-D-ribose](n-1) + ADP-D-ribose. In terms of biological role, poly(ADP-ribose) synthesized after DNA damage is only present transiently and is rapidly degraded by poly(ADP-ribose) glycohydrolase. This chain is Probable poly(ADP-ribose) glycohydrolase 2 (PARG2), found in Arabidopsis thaliana (Mouse-ear cress).